A 508-amino-acid chain; its full sequence is E3 ubiquitin-protein ligase XBAT32 (508 aa).

ANK repeat units follow at residues 50 to 79 (VRNSPLHYSAAQGHHEIVSLLVESGVDINL), 83 to 112 (RGQTALMQACQHGHWEVVLILILFGANIHR), 117 to 147 (NGGTALHLAALNGHPRCIRILLSEYIPSVPN), 177 to 206 (GGITPLHVAALNGHIETVQLLLDLGASVTQ), and 220 to 249 (AGSTALHYASCGGNTQCCQLLISKGACLAA). The RING-type zinc-finger motif lies at 321 to 372 (CAVCLERKCTVAADGCAHEFCTNCALYLSTTSITSSKTSNVTPGSVPCPLCR).

Interacts with ACS4 and ACS7. In terms of tissue distribution, expressed in the vascular system of primary root, vascular tissue of leaves, stems and anthers.

The catalysed reaction is S-ubiquitinyl-[E2 ubiquitin-conjugating enzyme]-L-cysteine + [acceptor protein]-L-lysine = [E2 ubiquitin-conjugating enzyme]-L-cysteine + N(6)-ubiquitinyl-[acceptor protein]-L-lysine.. Its pathway is protein modification; protein ubiquitination. E3 ubiquitin-protein ligase that mediates ubiquitination of ACC synthases (ACS). Negatively regulates ethylene biosynthesis probably via ubiquitin-dependent degradation of ACS4 and ACS7 enzymes. Regulates lateral root formation and development by controlling ethylene production which inhibits lateral root formation at high concentration. The sequence is that of E3 ubiquitin-protein ligase XBAT32 (XBAT32) from Arabidopsis thaliana (Mouse-ear cress).